Reading from the N-terminus, the 1019-residue chain is Serine/threonine-protein kinase 31 (1019 aa).

A Tudor domain is found at 78–137 (NLDPNKIYGGLFSEDQCWYRCKVLKIISVEKCLVRYIDYGNTEILNRSDIVEIPLELQFS). Residues 298–355 (EKIKQDQKLIEENEKLKTEKDALLESYKALELKVEQIAQELQQEKAAAVDLTNHLEYT) are a coiled coil. Residues 710-1019 (IGLLKYMNSG…TRNGEANFDC (310 aa)) form the Protein kinase domain. ATP is bound by residues 716–724 (MNSGGLLTM) and Lys-737.

Belongs to the protein kinase superfamily. Ser/Thr protein kinase family. Testis specific.

It carries out the reaction L-seryl-[protein] + ATP = O-phospho-L-seryl-[protein] + ADP + H(+). It catalyses the reaction L-threonyl-[protein] + ATP = O-phospho-L-threonyl-[protein] + ADP + H(+). The polypeptide is Serine/threonine-protein kinase 31 (STK31) (Homo sapiens (Human)).